Here is a 70-residue protein sequence, read N- to C-terminus: Small ribosomal subunit protein bS21 (70 aa).

This sequence belongs to the bacterial ribosomal protein bS21 family.

The protein is Small ribosomal subunit protein bS21 of Laribacter hongkongensis (strain HLHK9).